The chain runs to 438 residues: MDSKIDSKTFRVVMLPWLAYSHISRFLVFAKRLTNHNFHIYICSSQTNMQYLKNNLTSQYSKSIQLIELNLPSSSELPLQYHTTHGLPPHLTKTLSDDYQKSGPDFETILIKLNPHLVIYDFNQLWAPEVASTLHIPSIQLLSGCVALYALDAHLYTKPLDENLAKFPFPEIYPKNRDIPKGGSKYIERFVDCMRRSCEIILVRSTMELEGKYIDYLSKTLGKKVLPVGPLVQEASLLQDDHIWIMKWLDKKEESSVVFVCFGSEYILSDNEIEDIAYGLELSQVSFVWAIRAKTSALNGFIDRVGDKGLVIDKWVPQANILSHSSTGGFISHCGWSSTMESIRYGVPIIAMPMQFDQPYNARLMETVGAGIEVGRDGEGRLKREEIAAVVRKVVVEDSGESIREKAKELGEIMKKNMEAEVDGIVIENLVKLCEMNN.

Residues serine 264, 315-316, 333-341, and 355-358 each bind UDP-alpha-D-glucuronate; these read WV, HCGWSSTME, and QFDQ.

The protein belongs to the UDP-glycosyltransferase family. Monomer. In terms of tissue distribution, expressed in petals. Not detected in sepals, stems, leaves, tubular corollas and white petals.

The protein resides in the cytoplasm. It catalyses the reaction cyanidin 3-O-beta-D-glucoside + UDP-alpha-D-glucuronate = cyanidin 3-O-(2-O-beta-D-glucuronosyl)-beta-D-glucoside + UDP + H(+). Its activity is regulated as follows. Inhibited by copper, mercury, UDP, UTP and partially by calcium, cadmium, iron and UMP. Not affected by cobalt, magnesium, manganese, zinc, nickel, tin, uridine, sadium malonate and glucose. Functionally, involved in the production of glucuronosylated anthocyanins that are the origin of the red coloration of flowers. Can use cyanidin 3-O-6''-O-malonylglucoside, cyanidin 3-O-glucoside and delphinidin 3-O-glucosideas substrates, but not pelargonidin 3-O-glucoside, cyanidin 3-O-3'',6''-O-dimalonylglucoside, pelargonidin 3,5-O-diglucoside, pelargonidin 3-O-6''-O-malonylglucoside-5-O-glucoside, quercetin 3-O-glucoside, quercetin 3-O-6''-O-malonylglucoside, daidzin, genistin,7-O-6''-O-malonylglucosides of daidzein and genistein, cyanidin, quercetin, daidzein, genistein p-Nitrophenyl beta-D-glucopyranoside, beta-estradiol, 17alpha-estradiol, 1-naphthol, 2-naphthol, 4-methylumbelliferone, and p-nitrophenol. Highly specific for UDP-glucuronate (UDP-GlcUA). Arg-25 is decisive with respect to UDP-sugar specificity. The protein is Cyanidin-3-O-glucoside 2-O-glucuronosyltransferase (UGAT) of Bellis perennis (English daisy).